A 252-amino-acid polypeptide reads, in one-letter code: Cell division protein ZapD (252 aa).

Belongs to the ZapD family. Interacts with FtsZ.

Its subcellular location is the cytoplasm. Its function is as follows. Cell division factor that enhances FtsZ-ring assembly. Directly interacts with FtsZ and promotes bundling of FtsZ protofilaments, with a reduction in FtsZ GTPase activity. The sequence is that of Cell division protein ZapD from Cupriavidus necator (strain ATCC 17699 / DSM 428 / KCTC 22496 / NCIMB 10442 / H16 / Stanier 337) (Ralstonia eutropha).